The following is a 692-amino-acid chain: Elongation factor G (692 aa).

One can recognise a tr-type G domain in the interval 8-282 (EKTRNIGIMA…AVVEYMPAPT (275 aa)). Residues 17 to 24 (AHIDAGKT), 81 to 85 (DTPGH), and 135 to 138 (NKMD) contribute to the GTP site. The interval 285-304 (PNIKGVHPETGEADERHSSD) is disordered. Positions 290–304 (VHPETGEADERHSSD) are enriched in basic and acidic residues.

This sequence belongs to the TRAFAC class translation factor GTPase superfamily. Classic translation factor GTPase family. EF-G/EF-2 subfamily.

Its subcellular location is the cytoplasm. In terms of biological role, catalyzes the GTP-dependent ribosomal translocation step during translation elongation. During this step, the ribosome changes from the pre-translocational (PRE) to the post-translocational (POST) state as the newly formed A-site-bound peptidyl-tRNA and P-site-bound deacylated tRNA move to the P and E sites, respectively. Catalyzes the coordinated movement of the two tRNA molecules, the mRNA and conformational changes in the ribosome. The polypeptide is Elongation factor G (Desulfitobacterium hafniense (strain Y51)).